A 334-amino-acid chain; its full sequence is Glucokinase-like protein XF_1460 (334 aa).

Residue 18–23 (ADVGGT) participates in ATP binding.

The protein belongs to the bacterial glucokinase family.

The sequence is that of Glucokinase-like protein XF_1460 from Xylella fastidiosa (strain 9a5c).